The following is a 93-amino-acid chain: DNA-directed RNA polymerase subunit Rpo11 (93 aa).

This sequence belongs to the archaeal Rpo11/eukaryotic RPB11/RPC19 RNA polymerase subunit family. Part of the RNA polymerase complex.

The protein localises to the cytoplasm. The enzyme catalyses RNA(n) + a ribonucleoside 5'-triphosphate = RNA(n+1) + diphosphate. DNA-dependent RNA polymerase (RNAP) catalyzes the transcription of DNA into RNA using the four ribonucleoside triphosphates as substrates. This chain is DNA-directed RNA polymerase subunit Rpo11, found in Sulfurisphaera tokodaii (strain DSM 16993 / JCM 10545 / NBRC 100140 / 7) (Sulfolobus tokodaii).